Consider the following 262-residue polypeptide: NADP-dependent mannitol dehydrogenase (262 aa).

4 residues coordinate NADP(+): Ile23, Asp69, Asn96, and Arg129. The Proton donor role is filled by Ser149. The NADP(+) site is built by Tyr169, Lys173, Val202, Thr204, and Gln206. Tyr169 serves as the catalytic Proton acceptor. Lys173 serves as the catalytic Lowers pKa of active site Tyr.

This sequence belongs to the short-chain dehydrogenases/reductases (SDR) family. As to quaternary structure, homotetramer.

The catalysed reaction is D-mannitol + NADP(+) = D-fructose + NADPH + H(+). In Agaricus bisporus (White button mushroom), this protein is NADP-dependent mannitol dehydrogenase (mtdH).